The sequence spans 264 residues: 1-(5-phosphoribosyl)-5-[(5-phosphoribosylamino)methylideneamino] imidazole-4-carboxamide isomerase (264 aa).

The protein belongs to the HisA/HisF family.

It localises to the cytoplasm. It carries out the reaction 1-(5-phospho-beta-D-ribosyl)-5-[(5-phospho-beta-D-ribosylamino)methylideneamino]imidazole-4-carboxamide = 5-[(5-phospho-1-deoxy-D-ribulos-1-ylimino)methylamino]-1-(5-phospho-beta-D-ribosyl)imidazole-4-carboxamide. It functions in the pathway amino-acid biosynthesis; L-histidine biosynthesis; L-histidine from 5-phospho-alpha-D-ribose 1-diphosphate: step 4/9. This is 1-(5-phosphoribosyl)-5-[(5-phosphoribosylamino)methylideneamino] imidazole-4-carboxamide isomerase (HIS6) from Yarrowia lipolytica (strain CLIB 122 / E 150) (Yeast).